The chain runs to 144 residues: Conopressin-conophysin (144 aa).

An N-terminal signal peptide occupies residues 1–27 (MTRSALQMGRLTLVLCLLLQLVLVTQA). A disulfide bridge links C28 with C33. An Aspartic acid 1-amide modification is found at D36. A propeptide spanning residues 37–44 (GERDVDGR) is cleaved from the precursor. Disulfide bonds link C50–C90, C53–C64, C58–C80, C65–C70, C97–C117, C109–C129, and C118–C123. The propeptide occupies 131 to 144 (KESKSGIRVGCQRS).

This sequence belongs to the vasopressin/oxytocin family. In terms of tissue distribution, expressed by the venom duct.

It is found in the secreted. The polypeptide is Conopressin-conophysin (Conus bayani (Bayan's cone)).